The chain runs to 359 residues: Putative nucleotidyltransferase MAB21L1 (359 aa).

A ribonucleoside 5'-triphosphate is bound by residues 23 to 24 (RK) and 63 to 66 (YEGL). Residues E73 and E75 each contribute to the Mg(2+) site. Residues K248 and 252–255 (SLLK) each bind a ribonucleoside 5'-triphosphate.

Belongs to the mab-21 family. Monomer. Homodecamer; composed of 2 back to back homopentamers. The protein may exist as monomer in solution and oiligomerizes upon ligand binding.

It is found in the nucleus. In terms of biological role, putative nucleotidyltransferase required for several aspects of embryonic development including normal development of the eye. It is unclear whether it displays nucleotidyltransferase activity in vivo. Binds single-stranded RNA (ssRNA). In Xenopus tropicalis (Western clawed frog), this protein is Putative nucleotidyltransferase MAB21L1 (mab21l1).